A 251-amino-acid polypeptide reads, in one-letter code: 5-oxoprolinase subunit A 3 (251 aa).

This sequence belongs to the LamB/PxpA family. In terms of assembly, forms a complex composed of PxpA, PxpB and PxpC.

It carries out the reaction 5-oxo-L-proline + ATP + 2 H2O = L-glutamate + ADP + phosphate + H(+). Functionally, catalyzes the cleavage of 5-oxoproline to form L-glutamate coupled to the hydrolysis of ATP to ADP and inorganic phosphate. This chain is 5-oxoprolinase subunit A 3, found in Pseudomonas aeruginosa (strain ATCC 15692 / DSM 22644 / CIP 104116 / JCM 14847 / LMG 12228 / 1C / PRS 101 / PAO1).